The sequence spans 137 residues: Large ribosomal subunit protein uL16 (137 aa).

It belongs to the universal ribosomal protein uL16 family. As to quaternary structure, part of the 50S ribosomal subunit.

Binds 23S rRNA and is also seen to make contacts with the A and possibly P site tRNAs. This is Large ribosomal subunit protein uL16 from Streptococcus mutans serotype c (strain ATCC 700610 / UA159).